A 61-amino-acid chain; its full sequence is Photosystem II reaction center protein K (61 aa).

Positions 1 to 24 (MLNIFSLICICINSALHSSSFFFA) are excised as a propeptide. A helical membrane pass occupies residues 40–60 (MPVIPVLFFLLALVWQAAVSF).

The protein belongs to the PsbK family. PSII is composed of 1 copy each of membrane proteins PsbA, PsbB, PsbC, PsbD, PsbE, PsbF, PsbH, PsbI, PsbJ, PsbK, PsbL, PsbM, PsbT, PsbX, PsbY, PsbZ, Psb30/Ycf12, at least 3 peripheral proteins of the oxygen-evolving complex and a large number of cofactors. It forms dimeric complexes.

It is found in the plastid. The protein resides in the chloroplast thylakoid membrane. Its function is as follows. One of the components of the core complex of photosystem II (PSII). PSII is a light-driven water:plastoquinone oxidoreductase that uses light energy to abstract electrons from H(2)O, generating O(2) and a proton gradient subsequently used for ATP formation. It consists of a core antenna complex that captures photons, and an electron transfer chain that converts photonic excitation into a charge separation. This is Photosystem II reaction center protein K from Liriodendron tulipifera (Tuliptree).